Here is a 1563-residue protein sequence, read N- to C-terminus: MKEEETIEISEKEKDKERNDNQDTLTISWIEDWRNEETATKNENNKNNNSDGDSDDDDYYDDDEEIKNSRYNLFLEKILTLESNSNLKNILSLNINFKKDNKKSKETDTAATTTTTTTTTTTTTTTTTPTATANKKYIRTNNLLNNNNSSSSSSSNNNNNNNNNNNNNNNNNNNNNNNNNNNNNNNNNNNNNNNNNNNNNNNGENITYITSPLSNESLESTEECCFFLVHLPITKDLIFNQFTCLLIHLFQIEYNNTIIINNATSSSSVNSLNRSYNNSNNNNNNNYNSYNNRGNNYNNNNQQQQQQQNPNLKIRDLEGYQDCSHLKKLCLTIHDYLTQLLQRNPLIWYDSIINWSLSTLTIITRLLIILKNNKSQQQQQQQQQQQQQQQQQQQQQQQTKNKTQFPPPPPPPLRQPITPISAMVRERLDFYSFRSLLSLVLHLTRIFSIETFIEKSNVTQFLDITSKSSSSSSSSSSSSSSSSSSSSSSSSSSSSSKTIKPKKLPIYELGWILCHLGKKNPSLILGLTFNHYLKNIGLNSNNNNNKVNSKSQYIQDINCFQILEFLALQPSSYLSIIFQQHIDKIISNHKSNKNKNNTQFLKDIKTFLMLITKDDVFLSIGLPIILDKLSPFGINQFDNNNNNNNNNNNNNNNNNNNNNNNNNNNNNNNNNNNNNNNNNNKNNNNNSIKEDNSSEKDIESIKEILEKVLLGNSQVISFYSKRILLVLYHCCFGDSNDITFSSYSTSTLLQIKNQTRYNVSIKLLTSIVKDRLEKQLINKLYSPILNNNNNNNNNNNNNNNNNNNNNNNNNNNNNNNNNQQQQQQSQEIENSTFINNLNQDENITFYLNQIQCNNNNNNNNNNNNNNNNKLIKEKNNIIIKLISLIGMDSIYSSLIILNHIISKLKSNQFIQYFYTLVEQFQAVNSNTIEFFINDLFKSIDSFSHDDLITLLNNLLELVKITPPPSSSSPSNLSIYNETLKCISSNWVVLLKLIKHPNLIESNKMMSIEILYHSFNNRYNNNNNNSQSIQQLEISNNNNNIKKKEIYPSTLLSDKEMLEIRVLLEKILNLIFKSFKEKNSFERLKKFEIYKNLYLLICNGSSVYFSSTIDLILDSLFSKKTDMIIKLPILCALSPANTLPPPNYPANLVNAGSGSGNFGNGDDDDDEYGDDEYGANRNEKEELYFKQIINPSLPLSQPLIMLPMQSSLLEINYERKYYHYKFNDMNNPNHIPFTNKPKNLKKRIENNQSSAIDTTNNNNKNNEILTYKKQRMKKKKQSIQQNGNINNEQQQEEDDNDDADDQNEQDDYEKYNILNNENDLQSFIKSLVLYDGGGGSGFNNHGDINDRLQILTNQFLLRVSSPYLEPSYENYQEILPKQSHYERDIFIRNLFQQNPFLYRVLEIISIDGRELTKCLEVIKSLLVNEISYWYQCRNSYSESPIKSSHYHTTILLVKALINAEFIIHPLNLSLELFDKIKAEEISYILTSIWNFIKDYQPNPSQYQSSSSSSSSSSPPSNNTIIPTFKRVFSNCNTTPYSLTLKAIFHNHIKELCFHYARFFPKKYY.

Composition is skewed to basic and acidic residues over residues 1–21 (MKEE…RNDN) and 31–44 (EDWR…KNEN). Disordered regions lie at residues 1 to 63 (MKEE…YDDD), 102 to 208 (KKSK…NITY), and 270 to 310 (NSLN…QQNP). The segment covering 52–63 (GDSDDDDYYDDD) has biased composition (acidic residues). Composition is skewed to low complexity over residues 109 to 133 (TAAT…TATA) and 141 to 202 (NNLL…NNNN). Residues 350 to 370 (DSIINWSLSTLTIITRLLIIL) traverse the membrane as a helical segment. Low complexity predominate over residues 381–398 (QQQQQQQQQQQQQQQQQQ). 4 disordered regions span residues 381-417 (QQQQ…RQPI), 466-498 (SKSS…SSKT), 637-694 (FDNN…DNSS), and 784-828 (ILNN…SQEI). A compositionally biased stretch (pro residues) spans 405–414 (FPPPPPPPLR). 3 stretches are compositionally biased toward low complexity: residues 468-496 (SSSS…SSSS), 639-686 (NNNN…NNNN), and 786-824 (NNNN…QQQQ). Residues 877 to 897 (IIIKLISLIGMDSIYSSLIIL) form a helical membrane-spanning segment. Disordered stretches follow at residues 1154 to 1173 (SGNF…DEYG) and 1268 to 1303 (KQRM…DQNE). Residues 1160 to 1172 (GDDDDDEYGDDEY) are compositionally biased toward acidic residues. Positions 1277–1288 (SIQQNGNINNEQ) are enriched in low complexity. Residues 1289 to 1303 (QQEEDDNDDADDQNE) show a composition bias toward acidic residues.

This sequence belongs to the Integrator subunit 5 family. As to quaternary structure, component of the Integrator complex. The core complex associates with protein phosphatase 2A subunits, to form the Integrator-PP2A (INTAC) complex.

Its subcellular location is the nucleus. It localises to the cytoplasm. It is found in the nucleus membrane. Component of the integrator complex, a multiprotein complex that terminates RNA polymerase II (Pol II) transcription in the promoter-proximal region of genes. The integrator complex provides a quality checkpoint during transcription elongation by driving premature transcription termination of transcripts that are unfavorably configured for transcriptional elongation: the complex terminates transcription by (1) catalyzing dephosphorylation of the C-terminal domain (CTD) of Pol II subunit polr2a, (2) degrading the exiting nascent RNA transcript via endonuclease activity and (3) promoting the release of Pol II from bound DNA. The integrator complex is also involved in terminating the synthesis of non-coding Pol II transcripts, such as enhancer RNAs (eRNAs), small nuclear RNAs (snRNAs), telomerase RNAs and long non-coding RNAs (lncRNAs). This chain is Integrator complex subunit 5-like protein, found in Dictyostelium discoideum (Social amoeba).